The sequence spans 148 residues: Small ribosomal subunit protein uS13 (148 aa).

Positions 128–148 (RGQRTKSTGRRGSTIGVRKKK) are disordered.

It belongs to the universal ribosomal protein uS13 family. Part of the 30S ribosomal subunit. Forms a loose heterodimer with protein S19. Forms two bridges to the 50S subunit in the 70S ribosome.

Functionally, located at the top of the head of the 30S subunit, it contacts several helices of the 16S rRNA. In the 70S ribosome it contacts the 23S rRNA (bridge B1a) and protein L5 of the 50S subunit (bridge B1b), connecting the 2 subunits; these bridges are implicated in subunit movement. This is Small ribosomal subunit protein uS13 from Methanococcoides burtonii (strain DSM 6242 / NBRC 107633 / OCM 468 / ACE-M).